We begin with the raw amino-acid sequence, 218 residues long: Capsid protein (218 aa).

Met-1 bears the N-acetylmethionine; by host mark. Low complexity predominate over residues 1-10; it reads MDKSESTSAG. Residues 1–30 form a disordered region; that stretch reads MDKSESTSAGRNRRRRLRRGSRSASSSSDA. Residues 11-21 are compositionally biased toward basic residues; the sequence is RNRRRRLRRGS.

It belongs to the cucumovirus capsid protein family.

The protein localises to the virion. Functionally, capsid protein. Probably binds RNA and plays a role in packaging. The protein is Capsid protein of Cucumber mosaic virus (strain Y) (CMV).